The chain runs to 255 residues: Small ribosomal subunit protein uS2 (255 aa).

The segment at 232-255 is disordered; sequence ASGRDIGASEEAPIEPALEDEAGA.

This sequence belongs to the universal ribosomal protein uS2 family.

This Agrobacterium fabrum (strain C58 / ATCC 33970) (Agrobacterium tumefaciens (strain C58)) protein is Small ribosomal subunit protein uS2.